The sequence spans 614 residues: Dihydroxy-acid dehydratase (614 aa).

Asp81 contacts Mg(2+). Position 122 (Cys122) interacts with [2Fe-2S] cluster. Residues Asp123 and Lys124 each contribute to the Mg(2+) site. Lys124 is modified (N6-carboxylysine). Residue Cys193 participates in [2Fe-2S] cluster binding. Glu489 contributes to the Mg(2+) binding site. The active-site Proton acceptor is the Ser515.

The protein belongs to the IlvD/Edd family. Homodimer. The cofactor is [2Fe-2S] cluster. Mg(2+) serves as cofactor.

It catalyses the reaction (2R)-2,3-dihydroxy-3-methylbutanoate = 3-methyl-2-oxobutanoate + H2O. The catalysed reaction is (2R,3R)-2,3-dihydroxy-3-methylpentanoate = (S)-3-methyl-2-oxopentanoate + H2O. It participates in amino-acid biosynthesis; L-isoleucine biosynthesis; L-isoleucine from 2-oxobutanoate: step 3/4. It functions in the pathway amino-acid biosynthesis; L-valine biosynthesis; L-valine from pyruvate: step 3/4. Functions in the biosynthesis of branched-chain amino acids. Catalyzes the dehydration of (2R,3R)-2,3-dihydroxy-3-methylpentanoate (2,3-dihydroxy-3-methylvalerate) into 2-oxo-3-methylpentanoate (2-oxo-3-methylvalerate) and of (2R)-2,3-dihydroxy-3-methylbutanoate (2,3-dihydroxyisovalerate) into 2-oxo-3-methylbutanoate (2-oxoisovalerate), the penultimate precursor to L-isoleucine and L-valine, respectively. The protein is Dihydroxy-acid dehydratase of Hahella chejuensis (strain KCTC 2396).